The chain runs to 356 residues: Serendipity locus protein beta (356 aa).

Residues I171 to D193 form a C2H2-type 1; degenerate zinc finger. C2H2-type zinc fingers lie at residues A201 to H223, L229 to H251, Y257 to H279, L286 to H308, and Y315 to H337.

As to quaternary structure, binds chromatin; requires N-terminal regions to form protein-protein contacts, in addition to DNA specific recognition by the zinc fingers.

It is found in the nucleus. Binds to the consensus DNA sequence 5'-YCAGAGATGCGCA-3'. This is Serendipity locus protein beta (Sry-beta) from Drosophila melanogaster (Fruit fly).